Here is a 141-residue protein sequence, read N- to C-terminus: U1 small nuclear ribonucleoprotein C (141 aa).

A Matrin-type zinc finger spans residues 4 to 36 (YYCEYCDKYLTHDSPSVRKSHTIGKVHQQAVTL). The segment at 69–141 (LLPPNMVPGQ…SNSPPSNNDQ (73 aa)) is disordered. Over residues 83 to 97 (MMPPGQFPFPPPPGQ) the composition is skewed to pro residues. Composition is skewed to low complexity over residues 100-110 (GGMPPHQQQPM) and 124-141 (QQSA…NNDQ).

This sequence belongs to the U1 small nuclear ribonucleoprotein C family. Component of the U1 snRNP. The U1 snRNP is composed of the U1 snRNA and the 7 core Sm proteins SNRPB, SNRPD1, SNRPD2, SNRPD3, SNRPE, SNRPF and SNRPG that assemble in a heptameric protein ring on the Sm site of the small nuclear RNA to form the core snRNP, and at least 3 U1 snRNP-specific proteins SNRNP70/U1-70K, SNRPA/U1-A and SNRPC/U1-C. SNRPC/U1-C interacts with U1 snRNA and the 5' splice-site region of the pre-mRNA.

It is found in the nucleus. In terms of biological role, component of the spliceosomal U1 snRNP, which is essential for recognition of the pre-mRNA 5' splice-site and the subsequent assembly of the spliceosome. SNRPC/U1-C is directly involved in initial 5' splice-site recognition for both constitutive and regulated alternative splicing. The interaction with the 5' splice-site seems to precede base-pairing between the pre-mRNA and the U1 snRNA. Stimulates commitment or early (E) complex formation by stabilizing the base pairing of the 5' end of the U1 snRNA and the 5' splice-site region. The protein is U1 small nuclear ribonucleoprotein C of Heterostelium pallidum (strain ATCC 26659 / Pp 5 / PN500) (Cellular slime mold).